Here is a 527-residue protein sequence, read N- to C-terminus: Putative zinc finger CCCH domain-containing protein 64 (527 aa).

The disordered stretch occupies residues G103–V127. The C3H1-type zinc-finger motif lies at R213 to D241.

This is Putative zinc finger CCCH domain-containing protein 64 from Oryza sativa subsp. japonica (Rice).